Reading from the N-terminus, the 571-residue chain is Putative F-box protein At5g39460 (571 aa).

The region spanning alanine 9–glutamine 55 is the F-box domain.

This is Putative F-box protein At5g39460 from Arabidopsis thaliana (Mouse-ear cress).